The chain runs to 460 residues: Ribosomal protein uS12 methylthiotransferase RimO (460 aa).

In terms of domain architecture, MTTase N-terminal spans 16-130 (NKIHFISLGC…ILSAIESKES (115 aa)). The [4Fe-4S] cluster site is built by Cys25, Cys61, Cys93, Cys164, Cys168, and Cys171. In terms of domain architecture, Radical SAM core spans 150–382 (STPKHYAYLK…SQTQKKNVEK (233 aa)). The TRAM domain occupies 385–455 (KQFVGKIVEA…GYDLVGRVVN (71 aa)).

Belongs to the methylthiotransferase family. RimO subfamily. [4Fe-4S] cluster is required as a cofactor.

The protein resides in the cytoplasm. The catalysed reaction is L-aspartate(89)-[ribosomal protein uS12]-hydrogen + (sulfur carrier)-SH + AH2 + 2 S-adenosyl-L-methionine = 3-methylsulfanyl-L-aspartate(89)-[ribosomal protein uS12]-hydrogen + (sulfur carrier)-H + 5'-deoxyadenosine + L-methionine + A + S-adenosyl-L-homocysteine + 2 H(+). Its function is as follows. Catalyzes the methylthiolation of an aspartic acid residue of ribosomal protein uS12. The polypeptide is Ribosomal protein uS12 methylthiotransferase RimO (Chlamydia abortus (strain DSM 27085 / S26/3) (Chlamydophila abortus)).